We begin with the raw amino-acid sequence, 309 residues long: ADP-L-glycero-D-manno-heptose-6-epimerase (309 aa).

NADP(+)-binding positions include 10–11 (FI), 31–32 (DN), K38, K53, 75–79 (EGACS), and N92. Y140 functions as the Proton acceptor in the catalytic mechanism. K144 lines the NADP(+) pocket. A substrate-binding site is contributed by N169. V170 and K178 together coordinate NADP(+). K178 serves as the catalytic Proton acceptor. Residues S180, H187, 201–204 (FEGS), R209, and Y272 contribute to the substrate site.

The protein belongs to the NAD(P)-dependent epimerase/dehydratase family. HldD subfamily. In terms of assembly, homopentamer. It depends on NADP(+) as a cofactor.

The catalysed reaction is ADP-D-glycero-beta-D-manno-heptose = ADP-L-glycero-beta-D-manno-heptose. Its pathway is nucleotide-sugar biosynthesis; ADP-L-glycero-beta-D-manno-heptose biosynthesis; ADP-L-glycero-beta-D-manno-heptose from D-glycero-beta-D-manno-heptose 7-phosphate: step 4/4. In terms of biological role, catalyzes the interconversion between ADP-D-glycero-beta-D-manno-heptose and ADP-L-glycero-beta-D-manno-heptose via an epimerization at carbon 6 of the heptose. This chain is ADP-L-glycero-D-manno-heptose-6-epimerase, found in Enterobacter sp. (strain 638).